A 253-amino-acid polypeptide reads, in one-letter code: Pimeloyl-[acyl-carrier protein] methyl ester esterase (253 aa).

Substrate-binding positions include Trp18, 78-79 (SL), and 139-143 (FLALD). The active-site Nucleophile is Ser78. Active-site residues include Asp203 and His231. His231 serves as a coordination point for substrate.

It belongs to the AB hydrolase superfamily. Carboxylesterase BioH family. In terms of assembly, monomer.

The protein localises to the cytoplasm. It carries out the reaction 6-carboxyhexanoyl-[ACP] methyl ester + H2O = 6-carboxyhexanoyl-[ACP] + methanol + H(+). It functions in the pathway cofactor biosynthesis; biotin biosynthesis. Functionally, the physiological role of BioH is to remove the methyl group introduced by BioC when the pimeloyl moiety is complete. It allows to synthesize pimeloyl-ACP via the fatty acid synthetic pathway through the hydrolysis of the ester bonds of pimeloyl-ACP esters. The chain is Pimeloyl-[acyl-carrier protein] methyl ester esterase from Xanthomonas axonopodis pv. citri (strain 306).